Here is a 130-residue protein sequence, read N- to C-terminus: Small ribosomal subunit protein uS8 (130 aa).

Belongs to the universal ribosomal protein uS8 family. Component of the small ribosomal subunit (SSU). Mature N.crassa ribosomes consist of a small (40S) and a large (60S) subunit. The 40S small subunit contains 1 molecule of ribosomal RNA (18S rRNA) and at least 32 different proteins. The large 60S subunit contains 3 rRNA molecules (26S, 5.8S and 5S rRNA) and at least 42 different proteins.

The protein localises to the cytoplasm. Functionally, component of the ribosome, a large ribonucleoprotein complex responsible for the synthesis of proteins in the cell. The small ribosomal subunit (SSU) binds messenger RNAs (mRNAs) and translates the encoded message by selecting cognate aminoacyl-transfer RNA (tRNA) molecules. The large subunit (LSU) contains the ribosomal catalytic site termed the peptidyl transferase center (PTC), which catalyzes the formation of peptide bonds, thereby polymerizing the amino acids delivered by tRNAs into a polypeptide chain. The nascent polypeptides leave the ribosome through a tunnel in the LSU and interact with protein factors that function in enzymatic processing, targeting, and the membrane insertion of nascent chains at the exit of the ribosomal tunnel. The polypeptide is Small ribosomal subunit protein uS8 (crp-27) (Neurospora crassa (strain ATCC 24698 / 74-OR23-1A / CBS 708.71 / DSM 1257 / FGSC 987)).